Here is a 306-residue protein sequence, read N- to C-terminus: Pantothenate kinase (306 aa).

90-97 (GSVAVGKS) is a binding site for ATP.

Belongs to the prokaryotic pantothenate kinase family.

It localises to the cytoplasm. It catalyses the reaction (R)-pantothenate + ATP = (R)-4'-phosphopantothenate + ADP + H(+). It participates in cofactor biosynthesis; coenzyme A biosynthesis; CoA from (R)-pantothenate: step 1/5. The polypeptide is Pantothenate kinase (coaA) (Lactococcus lactis subsp. lactis (strain IL1403) (Streptococcus lactis)).